The following is a 775-amino-acid chain: MMEDNKQLALRIDGAVQSASQEVTNLRAELTATNRRLAELSGGGGPGPGPGAAASASAAGDSAATNMENPQLGAQVLLREEVSRLQEEVHLLRQMKEMLAKDLEESQGGKSSEVLSATELRVQLAQKEQELARAKEALQAMKADRKRLKGEKTDLVSQMQQLYATLESREEQLRDFIRNYEQHRKESEDAVKALAKEKDLLEREKWELRRQAKEATDHATALRSQLDLKDNRMKELEAELAMAKQSLATLTKDVPKRHSLAMPGETVLNGNQEWVVQADLPLTAAIRQSQQTLYHSHPPHPADRQAVRVSPCHSRQPSVISDASAAEGDRSSTPSDINSPRHRTHSLCNGDSPGPVQKNLHNPIVQSLEDLEDQKRKKKKEKMGFGSISRVFARGKQRKSLDPGLFDDSDSQCSPTRQSLSLSEGEEQMDRLQQVELVRTTPMSHWKAGTVQAWLEVVMAMPMYVKACTENVKSGKVLLSLSDEDLQLGLGVCSSLHRRKLRLAIEDYRDAEAGRSLSKAAELDHHWVAKAWLNDIGLSQYSQAFQNHLVDGRMLNSLMKRDLEKHLNVSKKFHQVSILLGIELLYQVNFSREALQERRARCETQNIDPVVWTNQRVLKWVRDIDLKEYADNLTNSGVHGAVLVLEPTFNAEAMATALGIPSGKHILRRHLAEEMSAVFHPANSTGIREAERFGTPPGRASSVTRAGKEENSSGLKYKAGRLPLGKIGRGFSSKDPDFHDDYGSLQNEDCGDDDPQSRLEQCRLEGYNSLEVTNV.

Residues 38-66 (AELSGGGGPGPGPGAAASASAAGDSAATN) form a disordered region. Residues 51–64 (GAAASASAAGDSAA) show a composition bias toward low complexity. Positions 74–256 (AQVLLREEVS…LATLTKDVPK (183 aa)) form a coiled coil. The interval 174–333 (RDFIRNYEQH…SAAEGDRSST (160 aa)) is interaction with PPL. The segment at 290–427 (QQTLYHSHPP…QSLSLSEGEE (138 aa)) is disordered. Phosphoserine occurs at positions 352, 367, and 387. Positions 411-422 (SQCSPTRQSLSL) are enriched in polar residues. SAM domains lie at 446–511 (WKAG…YRDA), 524–588 (DHHW…LYQV), and 612–679 (WTNQ…SAVF). 2 disordered regions span residues 688-715 (REAE…SSGL) and 729-762 (RGFS…LEQC). Positions 732-742 (SSKDPDFHDDY) are enriched in basic and acidic residues.

Belongs to the kazrin family. As to quaternary structure, isoform 2, isoform 3 and isoform 4 interact with PPL N-terminus. In terms of tissue distribution, isoform 2, isoform 3 and isoform 4 are expressed in several cell lines including keratinocytes and bladder and epidermoid carcinoma (at protein level). Isoform 2, isoform 3 and isoform 4 are expressed in hair follicle and interfollicular epidermis (at protein level).

It is found in the cytoplasm. The protein localises to the cytoskeleton. It localises to the cell junction. Its subcellular location is the desmosome. The protein resides in the nucleus. Functionally, component of the cornified envelope of keratinocytes. May be involved in the interplay between adherens junctions and desmosomes. The function in the nucleus is not known. In Homo sapiens (Human), this protein is Kazrin.